Here is a 104-residue protein sequence, read N- to C-terminus: Urease subunit beta (104 aa).

It belongs to the urease beta subunit family. As to quaternary structure, heterotrimer of UreA (gamma), UreB (beta) and UreC (alpha) subunits. Three heterotrimers associate to form the active enzyme.

It is found in the cytoplasm. It catalyses the reaction urea + 2 H2O + H(+) = hydrogencarbonate + 2 NH4(+). It functions in the pathway nitrogen metabolism; urea degradation; CO(2) and NH(3) from urea (urease route): step 1/1. The sequence is that of Urease subunit beta from Synechococcus sp. (strain RCC307).